The following is a 173-amino-acid chain: Co-chaperone protein HscB (173 aa).

Residues D2–L74 enclose the J domain.

The protein belongs to the HscB family. In terms of assembly, interacts with HscA and stimulates its ATPase activity. Interacts with IscU.

In terms of biological role, co-chaperone involved in the maturation of iron-sulfur cluster-containing proteins. Seems to help targeting proteins to be folded toward HscA. The chain is Co-chaperone protein HscB from Serratia proteamaculans (strain 568).